The following is a 279-amino-acid chain: 4-diphosphocytidyl-2-C-methyl-D-erythritol kinase (279 aa).

Residue lysine 11 is part of the active site. Residue proline 95–serine 105 coordinates ATP. Aspartate 137 is an active-site residue.

Belongs to the GHMP kinase family. IspE subfamily.

The catalysed reaction is 4-CDP-2-C-methyl-D-erythritol + ATP = 4-CDP-2-C-methyl-D-erythritol 2-phosphate + ADP + H(+). The protein operates within isoprenoid biosynthesis; isopentenyl diphosphate biosynthesis via DXP pathway; isopentenyl diphosphate from 1-deoxy-D-xylulose 5-phosphate: step 3/6. In terms of biological role, catalyzes the phosphorylation of the position 2 hydroxy group of 4-diphosphocytidyl-2C-methyl-D-erythritol. The polypeptide is 4-diphosphocytidyl-2-C-methyl-D-erythritol kinase (Geotalea daltonii (strain DSM 22248 / JCM 15807 / FRC-32) (Geobacter daltonii)).